Here is a 616-residue protein sequence, read N- to C-terminus: Chaperone protein HscA (616 aa).

The protein belongs to the heat shock protein 70 family.

Chaperone involved in the maturation of iron-sulfur cluster-containing proteins. Has a low intrinsic ATPase activity which is markedly stimulated by HscB. Involved in the maturation of IscU. In Escherichia coli O7:K1 (strain IAI39 / ExPEC), this protein is Chaperone protein HscA.